We begin with the raw amino-acid sequence, 97 residues long: Large ribosomal subunit protein eL21 (97 aa).

The protein belongs to the eukaryotic ribosomal protein eL21 family.

This Methanococcus aeolicus (strain ATCC BAA-1280 / DSM 17508 / OCM 812 / Nankai-3) protein is Large ribosomal subunit protein eL21.